Here is a 147-residue protein sequence, read N- to C-terminus: 3-dehydroquinate dehydratase (147 aa).

The active-site Proton acceptor is the Y23. Residues N74, H80, and D87 each contribute to the substrate site. The active-site Proton donor is H100. Substrate-binding positions include 101–102 (LS) and R111.

Belongs to the type-II 3-dehydroquinase family. Homododecamer.

It catalyses the reaction 3-dehydroquinate = 3-dehydroshikimate + H2O. It functions in the pathway metabolic intermediate biosynthesis; chorismate biosynthesis; chorismate from D-erythrose 4-phosphate and phosphoenolpyruvate: step 3/7. In terms of biological role, catalyzes a trans-dehydration via an enolate intermediate. The chain is 3-dehydroquinate dehydratase from Clostridium botulinum (strain Okra / Type B1).